We begin with the raw amino-acid sequence, 172 residues long: uncharacterized protein (172 aa).

This is an uncharacterized protein from Rattus norvegicus (Rat).